Consider the following 537-residue polypeptide: Hexahomomethionine N-hydroxylase (537 aa).

Residues 7–27 (FNTCFQILLGFIVFIASITLL) traverse the membrane as a helical segment.

This sequence belongs to the cytochrome P450 family. Heme serves as cofactor. Highly expressed in hypocotyl and roots. Lower expression in siliques, stems and leaves. Barely detectable in flowers. Expressed only in the vascular bundles in apical plant parts.

Its subcellular location is the endoplasmic reticulum membrane. It carries out the reaction L-hexahomomethionine + 2 reduced [NADPH--hemoprotein reductase] + 2 O2 = (E)-9-(methylsulfanyl)nonanal oxime + 2 oxidized [NADPH--hemoprotein reductase] + CO2 + 3 H2O + 2 H(+). The catalysed reaction is L-pentahomomethionine + 2 reduced [NADPH--hemoprotein reductase] + 2 O2 = (E)-8-(methylsulfanyl)octanal oxime + 2 oxidized [NADPH--hemoprotein reductase] + CO2 + 3 H2O + 2 H(+). It catalyses the reaction an L-polyhomomethionine + 2 reduced [NADPH--hemoprotein reductase] + 2 O2 = an (E)-omega-(methylsulfanyl)-alkanal oxime + 2 oxidized [NADPH--hemoprotein reductase] + CO2 + 3 H2O + 2 H(+). Functionally, catalyzes the conversion of the long chain elongated methionines penta- and hexahomomethionine to their corresponding aldoximes 8-methylthiooctanaldoxime and 9-methylthiononanaldoxime. In Arabidopsis thaliana (Mouse-ear cress), this protein is Hexahomomethionine N-hydroxylase (CYP79F2).